Consider the following 301-residue polypeptide: Bifunctional protein FolD (301 aa).

Residues 166–168 (GKS), Ser-191, and Ile-232 each bind NADP(+).

The protein belongs to the tetrahydrofolate dehydrogenase/cyclohydrolase family. In terms of assembly, homodimer.

It catalyses the reaction (6R)-5,10-methylene-5,6,7,8-tetrahydrofolate + NADP(+) = (6R)-5,10-methenyltetrahydrofolate + NADPH. It carries out the reaction (6R)-5,10-methenyltetrahydrofolate + H2O = (6R)-10-formyltetrahydrofolate + H(+). It participates in one-carbon metabolism; tetrahydrofolate interconversion. Its function is as follows. Catalyzes the oxidation of 5,10-methylenetetrahydrofolate to 5,10-methenyltetrahydrofolate and then the hydrolysis of 5,10-methenyltetrahydrofolate to 10-formyltetrahydrofolate. The chain is Bifunctional protein FolD from Orientia tsutsugamushi (strain Boryong) (Rickettsia tsutsugamushi).